Reading from the N-terminus, the 112-residue chain is Large ribosomal subunit protein uL22 (112 aa).

The protein belongs to the universal ribosomal protein uL22 family. In terms of assembly, part of the 50S ribosomal subunit.

Functionally, this protein binds specifically to 23S rRNA; its binding is stimulated by other ribosomal proteins, e.g. L4, L17, and L20. It is important during the early stages of 50S assembly. It makes multiple contacts with different domains of the 23S rRNA in the assembled 50S subunit and ribosome. Its function is as follows. The globular domain of the protein is located near the polypeptide exit tunnel on the outside of the subunit, while an extended beta-hairpin is found that lines the wall of the exit tunnel in the center of the 70S ribosome. The protein is Large ribosomal subunit protein uL22 of Anaplasma marginale (strain Florida).